The following is a 186-amino-acid chain: Large ribosomal subunit protein uL5c (186 aa).

It belongs to the universal ribosomal protein uL5 family. Part of the 50S ribosomal subunit; contacts the 5S rRNA.

It localises to the plastid. The protein localises to the chloroplast. Functionally, binds 5S rRNA, forms part of the central protuberance of the 50S subunit. The protein is Large ribosomal subunit protein uL5c (rpl5) of Chaetosphaeridium globosum (Charophycean green alga).